The sequence spans 159 residues: Protein-export protein SecB (159 aa).

Belongs to the SecB family. Homotetramer, a dimer of dimers. One homotetramer interacts with 1 SecA dimer.

It is found in the cytoplasm. One of the proteins required for the normal export of preproteins out of the cell cytoplasm. It is a molecular chaperone that binds to a subset of precursor proteins, maintaining them in a translocation-competent state. It also specifically binds to its receptor SecA. The sequence is that of Protein-export protein SecB from Bartonella bacilliformis (strain ATCC 35685 / KC583 / Herrer 020/F12,63).